Here is a 434-residue protein sequence, read N- to C-terminus: MLGAVKMEGHEATDWSSYYGEPEAYSSVGNMNAGLSMNPMNTYMSMSAMSTSANMTAGSMNMSYVNTGMSPSLTGMSPGTGAMTGMGTGVASMASHLSPSMSPMSAQATSMNALAPYTNMNSMSPIYGQSNINRSRDPKTYRRSYTHAKPPYSYISLITMAIQQSPNKMLTLSEIYQWIMDLFPFYRQNQQRWQNSIRHSLSFNDCFLKVPRSPDKPGKGSFWTLHPDSGNMFENGCYLRRQKRFKCEKKPSLREGGGKKLSEGSSSVGSAANSSSESSVGNESPHSSSSPCQEQKRSLVDMKSSQGLSPDHAASPASQAQHLLSQHHSVLSHEAQSHLKPEHHYSFNHPFSINNLMSSEQQHHHHHHHNHHHHHKMDLKAYEQVMHYSGYGSPMTGSLAMSTVTNKSGLESSPISSDTSYYQGVYSRPIMNSS.

The fork-head DNA-binding region spans 149 to 243 (KPPYSYISLI…ENGCYLRRQK (95 aa)). Positions 249–262 (KKPSLREGGGKKLS) are enriched in basic and acidic residues. A disordered region spans residues 249–339 (KKPSLREGGG…VLSHEAQSHL (91 aa)). Low complexity-rich tracts occupy residues 263-291 (EGSS…SSSP) and 317-333 (ASQA…VLSH).

The protein resides in the nucleus. Acts as a transcriptional activator during early development, limiting the extent of mesoderm formation in the gastrula. Binds to DNA via the target sequence 5'-GT[AC]AACA-3', with 5'-GTAAACA-3' being the preferred binding site. This Xenopus tropicalis (Western clawed frog) protein is Forkhead box protein A2.